Reading from the N-terminus, the 316-residue chain is Olfactory receptor 10A7 (316 aa).

Topologically, residues 1–25 are extracellular; that stretch reads MICENHTRVTEFILLGFTNNPEMQV. The N-linked (GlcNAc...) asparagine glycan is linked to asparagine 5. The helical transmembrane segment at 26–46 threads the bilayer; that stretch reads SLFIFFLAIYTVTLLGNFLIV. Residues 47–54 lie on the Cytoplasmic side of the membrane; that stretch reads TVTSVDLA. A helical membrane pass occupies residues 55–75; sequence LQTPMYFFLQNLSLLEVCFTL. At 76 to 99 the chain is on the extracellular side; it reads VMVPKMLVDLVSPRKIISFVGCGT. A helical membrane pass occupies residues 100 to 120; it reads QMYFFFFFGSSECFLLSMMAY. Over 121–139 the chain is Cytoplasmic; it reads DRFVAICNPLHYSVIMNRS. The helical transmembrane segment at 140–160 threads the bilayer; the sequence is LCLWMAIGSWMSGVPVSMLQT. Over 161-197 the chain is Extracellular; sequence AWMMALPFCGPNAVDHFFCDGPPVLKLVTVDTTMYEM. The chain crosses the membrane as a helical span at residues 198–217; the sequence is QALASTLLFIMFPFCLILVS. Over 218–237 the chain is Cytoplasmic; that stretch reads YTRIIITILRMSSATGRQKA. A helical transmembrane segment spans residues 238 to 258; the sequence is FSTCSSHLIVVSLFYGTASLT. The Extracellular portion of the chain corresponds to 259–271; sequence YLRPKSNQSPESK. The chain crosses the membrane as a helical span at residues 272–292; that stretch reads KLVSLSYTVITPMLNPIIYGL. At 293-316 the chain is on the cytoplasmic side; it reads RNNEVKGAVKRTITQKVLQKLDVF.

It belongs to the G-protein coupled receptor 1 family.

The protein localises to the cell membrane. Odorant receptor. The protein is Olfactory receptor 10A7 (OR10A7) of Homo sapiens (Human).